A 477-amino-acid chain; its full sequence is Erythritol/L-threitol-binding protein (477 aa).

Positions 1–38 (MMSRESQPGLHRQLSRRNMLAAMGLAGAAAVSLPVLSA) form a signal peptide, tat-type signal.

The protein belongs to the bacterial solute-binding protein 1 family. In terms of processing, predicted to be exported by the Tat system. The position of the signal peptide cleavage has not been experimentally proven.

Functionally, part of an ABC transporter complex involved in erythritol/L-threitol import. Binds erythritol and L-threitol. Functions in the transport for the degradation pathways of erythritol and L-threitol, that allow M.smegmatis to grow on these compounds as the sole carbon source. This chain is Erythritol/L-threitol-binding protein, found in Mycolicibacterium smegmatis (strain ATCC 700084 / mc(2)155) (Mycobacterium smegmatis).